We begin with the raw amino-acid sequence, 129 residues long: V-type proton ATPase subunit F 2 (129 aa).

The protein belongs to the V-ATPase F subunit family. In terms of assembly, V-ATPase is a heteromultimeric enzyme made up of two complexes: the ATP-hydrolytic V1 complex and the proton translocation V0 complex. The V1 complex consists of three catalytic AB heterodimers that form a heterohexamer, three peripheral stalks each consisting of EG heterodimers, one central rotor including subunits D and F, and the regulatory subunits C and H. The proton translocation complex V0 consists of the proton transport subunit a, a ring of proteolipid subunits c9c'', rotary subunit d, subunits e and f, and the accessory subunits VhaAC45 and ATP6AP2.

In terms of biological role, subunit of the V1 complex of vacuolar(H+)-ATPase (V-ATPase), a multisubunit enzyme composed of a peripheral complex (V1) that hydrolyzes ATP and a membrane integral complex (V0) that translocates protons. V-ATPase is responsible for acidifying and maintaining the pH of intracellular compartments and in some cell types, is targeted to the plasma membrane, where it is responsible for acidifying the extracellular environment. The polypeptide is V-type proton ATPase subunit F 2 (Vha14-2) (Drosophila melanogaster (Fruit fly)).